The sequence spans 632 residues: tRNA 5-methylaminomethyl-2-thiouridine biosynthesis bifunctional protein MnmC (632 aa).

A tRNA (mnm(5)s(2)U34)-methyltransferase region spans residues 1-247 (MNSRIFPAAM…KWHMTLGQRL (247 aa)). The tract at residues 267 to 632 (VGAGLAGAAV…TDLLAQIAPR (366 aa)) is FAD-dependent cmnm(5)s(2)U34 oxidoreductase.

In the N-terminal section; belongs to the methyltransferase superfamily. tRNA (mnm(5)s(2)U34)-methyltransferase family. It in the C-terminal section; belongs to the DAO family. FAD is required as a cofactor.

The protein localises to the cytoplasm. The catalysed reaction is 5-aminomethyl-2-thiouridine(34) in tRNA + S-adenosyl-L-methionine = 5-methylaminomethyl-2-thiouridine(34) in tRNA + S-adenosyl-L-homocysteine + H(+). In terms of biological role, catalyzes the last two steps in the biosynthesis of 5-methylaminomethyl-2-thiouridine (mnm(5)s(2)U) at the wobble position (U34) in tRNA. Catalyzes the FAD-dependent demodification of cmnm(5)s(2)U34 to nm(5)s(2)U34, followed by the transfer of a methyl group from S-adenosyl-L-methionine to nm(5)s(2)U34, to form mnm(5)s(2)U34. The protein is tRNA 5-methylaminomethyl-2-thiouridine biosynthesis bifunctional protein MnmC of Bordetella bronchiseptica (strain ATCC BAA-588 / NCTC 13252 / RB50) (Alcaligenes bronchisepticus).